A 209-amino-acid chain; its full sequence is Ubiquitin-conjugating enzyme E2 S (209 aa).

The UBC core domain occupies 14 to 160 (QTIRQVMREL…ARMMTEIHAQ (147 aa)). Cys98 acts as the Glycyl thioester intermediate in catalysis. Positions 165 to 209 (GVGATGDAKDDGGPSTKKHAGLDKKLQDKKKEKLLKEKKRMLKRL) are disordered. Over residues 184–199 (AGLDKKLQDKKKEKLL) the composition is skewed to basic and acidic residues. Over residues 200–209 (KEKKRMLKRL) the composition is skewed to basic residues.

Belongs to the ubiquitin-conjugating enzyme family.

The enzyme catalyses S-ubiquitinyl-[E1 ubiquitin-activating enzyme]-L-cysteine + [E2 ubiquitin-conjugating enzyme]-L-cysteine = [E1 ubiquitin-activating enzyme]-L-cysteine + S-ubiquitinyl-[E2 ubiquitin-conjugating enzyme]-L-cysteine.. Its pathway is protein modification; protein ubiquitination. Catalyzes the covalent attachment of ubiquitin to other proteins. Acts as an essential factor of the anaphase promoting complex/cyclosome (APC/C), a cell cycle-regulated ubiquitin ligase that controls progression through mitosis. Acts by specifically elongating polyubiquitin chains initiated by the E2 enzyme vih/UbcH10 on APC/C substrates, enhancing the degradation of APC/C substrates by the proteasome and promoting mitotic exit. The sequence is that of Ubiquitin-conjugating enzyme E2 S from Drosophila simulans (Fruit fly).